The sequence spans 328 residues: Aryl-hydrocarbon-interacting protein-like 1 (328 aa).

The PPIase FKBP-type domain occupies 53 to 145; it reads KQVGHPMHII…DLDELQKEPQ (93 aa). TPR repeat units lie at residues 178-211, 230-263, and 264-297; these read VPILHGEGNRLFKLGRYEEASNKYQEAIVCLRNL, NTLILNYCQCLLKKEEYYEVLEHTSDILRHHPGI, and VKAYYVRARAHAEVWNEAEAKADLEKVLELEPSM.

Directly interacts with NUB1.

The protein resides in the cytoplasm. Its subcellular location is the nucleus. Functionally, may be important in protein trafficking and/or protein folding and stabilization. The polypeptide is Aryl-hydrocarbon-interacting protein-like 1 (AIPL1) (Bos taurus (Bovine)).